The following is a 413-amino-acid chain: Inactive serine protease 35 (413 aa).

The signal sequence occupies residues 1-16 (MENMLLWLIFFTPGWT). Residue Asn-90 is glycosylated (N-linked (GlcNAc...) asparagine). The Peptidase S1 domain occupies 124–408 (VYGTDSRFSI…ICLWIHGNDA (285 aa)). Cysteines 154 and 170 form a disulfide. Residues 191 to 207 (MRNKSGGKKRRGSKRSR) show a composition bias toward basic residues. Positions 191–250 (MRNKSGGKKRRGSKRSRREASGGDQREGTREHLRERAKGGRRRKKSGRGQRIAEGRPSFQ) are disordered. Residues 208 to 228 (REASGGDQREGTREHLRERAK) show a composition bias toward basic and acidic residues. Residues 229-238 (GGRRRKKSGR) are compositionally biased toward basic residues.

The protein belongs to the peptidase S1 family.

The protein resides in the secreted. The polypeptide is Inactive serine protease 35 (PRSS35) (Homo sapiens (Human)).